The chain runs to 439 residues: Apolipoprotein N-acyltransferase (439 aa).

The next 6 membrane-spanning stretches (helical) occupy residues 13–33, 47–67, 75–95, 97–117, 149–169, and 175–195; these read LLAGILFYLSFSKLNLYFLVF, LFSFGFSAFFLSLLWIRIPLI, FIAYPALVLLVLFLSLYQFGL, YLLWRVFKFSFFAFPFLYTLV, NAGTVFLGSFVVLLISLFPLF, and IFSLAIITPLLIYGFIKETSY. Positions 207–439 constitute a CN hydrolase domain; sequence IQPFVPQDVK…GSRGILLFSF (233 aa). The active-site Proton acceptor is the E248. K305 is a catalytic residue. C355 serves as the catalytic Nucleophile.

Belongs to the CN hydrolase family. Apolipoprotein N-acyltransferase subfamily.

It is found in the cell inner membrane. The enzyme catalyses N-terminal S-1,2-diacyl-sn-glyceryl-L-cysteinyl-[lipoprotein] + a glycerophospholipid = N-acyl-S-1,2-diacyl-sn-glyceryl-L-cysteinyl-[lipoprotein] + a 2-acyl-sn-glycero-3-phospholipid + H(+). The protein operates within protein modification; lipoprotein biosynthesis (N-acyl transfer). In terms of biological role, catalyzes the phospholipid dependent N-acylation of the N-terminal cysteine of apolipoprotein, the last step in lipoprotein maturation. In Aquifex aeolicus (strain VF5), this protein is Apolipoprotein N-acyltransferase.